Consider the following 114-residue polypeptide: Prostate stem cell antigen (114 aa).

Residues 1 to 11 (MAGLALQPGTA) form the signal peptide. One can recognise a UPAR/Ly6 domain in the interval 12-86 (LLCYSCKAQV…CCDTDLCNAS (75 aa)). 5 cysteine pairs are disulfide-bonded: Cys-14/Cys-39, Cys-17/Cys-26, Cys-32/Cys-57, Cys-61/Cys-77, and Cys-78/Cys-83. N-linked (GlcNAc...) asparagine glycosylation occurs at Asn-31. A lipid anchor (GPI-anchor amidated serine) is attached at Ser-86. A propeptide spans 86–114 (SGAHALQPAAAILALLPALGLLLWGPGQL) (removed in mature form).

In terms of assembly, interacts with CHRNA4. N-glycosylated. Highly expressed in prostate (basal, secretory and neuroendocrine epithelium cells). Also found in bladder (transitional epithelium), placenta (trophoblasts), stomach (neuroendocrine cells), colon (neuroendocrine cells) and kidney (collecting ducts). Overexpressed in prostate cancers and expression is correlated with tumor stage, grade and androgen-independence. Highly expressed in prostate cancer bone metastases. Expressed in gastric epithelial cells, mainly in the isthmus (at protein level). Not detected in normal intestinal epithelium (at protein level). Expressed in brain cortex; expression is significantly increased in the front cortex of Alzheimer disease patients.

The protein localises to the cell membrane. Functionally, may be involved in the regulation of cell proliferation. Has a cell-proliferation inhibition activity in vitro. May act as a modulator of nicotinic acetylcholine receptors (nAChRs) activity. In vitro inhibits nicotine-induced signaling probably implicating alpha-3:beta-2- or alpha-7-containing nAChRs. The protein is Prostate stem cell antigen (PSCA) of Homo sapiens (Human).